The chain runs to 308 residues: Baculoviral IAP repeat-containing protein bir-2 (308 aa).

BIR repeat units follow at residues 27-98 (RFAS…EFVM) and 170-241 (RLAT…DFIK). Zn(2+) is bound by residues C68, C71, H87, C94, C211, C214, H230, and C237.

This sequence belongs to the IAP family.

The protein is Baculoviral IAP repeat-containing protein bir-2 of Caenorhabditis elegans.